A 531-amino-acid chain; its full sequence is Berberine bridge enzyme-like 9 (531 aa).

Residues 1-23 (MTSLTTQTLIITIFLLTIPTSFA) form the signal peptide. A disulfide bridge links C35 with C99. N-linked (GlcNAc...) asparagine glycans are attached at residues N76, N164, N271, N300, N314, N400, and N485. An FAD-binding PCMH-type domain is found at 77–252 (MTRKPVAIVA…LAWKIKLVPV (176 aa)). The 6-(S-cysteinyl)-8alpha-(pros-histidyl)-FAD (His-Cys) cross-link spans 114 to 177 (HDYDGMSYLS…DLRGFPAGIC (64 aa)).

This sequence belongs to the oxygen-dependent FAD-linked oxidoreductase family. Requires FAD as cofactor. Post-translationally, the FAD cofactor is bound via a bicovalent 6-S-cysteinyl, 8alpha-N1-histidyl FAD linkage. In terms of tissue distribution, accumulates in cell walls of etiolated hypocotyls.

It localises to the secreted. It is found in the cell wall. This Arabidopsis thaliana (Mouse-ear cress) protein is Berberine bridge enzyme-like 9.